Consider the following 372-residue polypeptide: Glutamate 5-kinase (372 aa).

An ATP-binding site is contributed by Lys-14. Ser-54, Asp-141, and Asn-153 together coordinate substrate. An ATP-binding site is contributed by 173–174; the sequence is TD. The region spanning 280–358 is the PUA domain; it reads RGHVVIDDGA…GEIESVLGYM (79 aa).

It belongs to the glutamate 5-kinase family.

The protein localises to the cytoplasm. It carries out the reaction L-glutamate + ATP = L-glutamyl 5-phosphate + ADP. It functions in the pathway amino-acid biosynthesis; L-proline biosynthesis; L-glutamate 5-semialdehyde from L-glutamate: step 1/2. Catalyzes the transfer of a phosphate group to glutamate to form L-glutamate 5-phosphate. The chain is Glutamate 5-kinase from Paraburkholderia phytofirmans (strain DSM 17436 / LMG 22146 / PsJN) (Burkholderia phytofirmans).